Reading from the N-terminus, the 696-residue chain is Two-component response regulator ORR22 (696 aa).

Positions 27–142 constitute a Response regulatory domain; the sequence is RVLAVDDDPV…ELRNIWQHVV (116 aa). Residue Asp-78 is modified to 4-aspartylphosphate. The tract at residues 154-214 is disordered; it reads LDFSKECNKP…DYQENDEPSA (61 aa). The span at 176–185 shows a compositional bias: polar residues; that stretch reads TCGSSDQNGR. Residues 195 to 211 show a composition bias toward acidic residues; that stretch reads GEDDDEGDDNDYQENDE. The segment at residues 214–273 is a DNA-binding region (myb-like GARP); the sequence is AAKKPRVVWSVELHRKFVAAVNQLGIDKAVPKRILELMNVEKLTRENVASHLQKYRLYLK.

It belongs to the ARR family. Type-B subfamily. In terms of processing, two-component system major event consists of a His-to-Asp phosphorelay between a sensor histidine kinase (HK) and a response regulator (RR). In plants, the His-to-Asp phosphorelay involves an additional intermediate named Histidine-containing phosphotransfer protein (HPt). This multistep phosphorelay consists of a His-Asp-His-Asp sequential transfer of a phosphate group between first a His and an Asp of the HK protein, followed by the transfer to a conserved His of the HPt protein and finally the transfer to an Asp in the receiver domain of the RR protein.

The protein localises to the nucleus. Its function is as follows. Transcriptional activator that binds specific DNA sequence. Functions as a response regulator involved in His-to-Asp phosphorelay signal transduction system. Phosphorylation of the Asp residue in the receiver domain activates the ability of the protein to promote the transcription of target genes. May directly activate some type-A response regulators in response to cytokinins. This chain is Two-component response regulator ORR22, found in Oryza sativa subsp. indica (Rice).